A 234-amino-acid chain; its full sequence is Thymidylate kinase (234 aa).

10-17 (GGEGSGKT) serves as a coordination point for ATP.

The protein belongs to the thymidylate kinase family.

The catalysed reaction is dTMP + ATP = dTDP + ADP. Its function is as follows. Phosphorylation of dTMP to form dTDP in both de novo and salvage pathways of dTTP synthesis. This Cyanothece sp. (strain PCC 7425 / ATCC 29141) protein is Thymidylate kinase.